The chain runs to 110 residues: Translation initiation factor 1A 3 (110 aa).

Positions 1–29 are disordered; the sequence is MIRKRQSGSNKSVSSGNNQEVTRVRTPRK. Positions 7–18 are enriched in low complexity; the sequence is SGSNKSVSSGNN. The region spanning 22–96 is the S1-like domain; it reads TRVRTPRKDR…SKADVIWKYT (75 aa).

It belongs to the eIF-1A family.

Functionally, seems to be required for maximal rate of protein biosynthesis. Enhances ribosome dissociation into subunits and stabilizes the binding of the initiator Met-tRNA(I) to 40 S ribosomal subunits. The sequence is that of Translation initiation factor 1A 3 (eIF1A3) from Methanosarcina acetivorans (strain ATCC 35395 / DSM 2834 / JCM 12185 / C2A).